A 290-amino-acid polypeptide reads, in one-letter code: Small ribosomal subunit biogenesis GTPase RsgA (290 aa).

The 158-residue stretch at 61 to 218 (KSELVRPTVA…IVDTPGFSTL (158 aa)) folds into the CP-type G domain. GTP-binding positions include 110–113 (NKID) and 161–169 (GPSGAGKST). Zn(2+) contacts are provided by C243, C248, H250, and C256.

Belongs to the TRAFAC class YlqF/YawG GTPase family. RsgA subfamily. In terms of assembly, monomer. Associates with 30S ribosomal subunit, binds 16S rRNA. The cofactor is Zn(2+).

It localises to the cytoplasm. One of several proteins that assist in the late maturation steps of the functional core of the 30S ribosomal subunit. Helps release RbfA from mature subunits. May play a role in the assembly of ribosomal proteins into the subunit. Circularly permuted GTPase that catalyzes slow GTP hydrolysis, GTPase activity is stimulated by the 30S ribosomal subunit. The sequence is that of Small ribosomal subunit biogenesis GTPase RsgA from Clostridium beijerinckii (strain ATCC 51743 / NCIMB 8052) (Clostridium acetobutylicum).